We begin with the raw amino-acid sequence, 161 residues long: ATP synthase subunit b 2 (161 aa).

The helical transmembrane segment at 13–33 (IVWLVIALVAMYFVMSRLAIP) threads the bilayer.

The protein belongs to the ATPase B chain family. As to quaternary structure, F-type ATPases have 2 components, F(1) - the catalytic core - and F(0) - the membrane proton channel. F(1) has five subunits: alpha(3), beta(3), gamma(1), delta(1), epsilon(1). F(0) has three main subunits: a(1), b(2) and c(10-14). The alpha and beta chains form an alternating ring which encloses part of the gamma chain. F(1) is attached to F(0) by a central stalk formed by the gamma and epsilon chains, while a peripheral stalk is formed by the delta and b chains.

It localises to the cell inner membrane. F(1)F(0) ATP synthase produces ATP from ADP in the presence of a proton or sodium gradient. F-type ATPases consist of two structural domains, F(1) containing the extramembraneous catalytic core and F(0) containing the membrane proton channel, linked together by a central stalk and a peripheral stalk. During catalysis, ATP synthesis in the catalytic domain of F(1) is coupled via a rotary mechanism of the central stalk subunits to proton translocation. In terms of biological role, component of the F(0) channel, it forms part of the peripheral stalk, linking F(1) to F(0). The b'-subunit is a diverged and duplicated form of b found in plants and photosynthetic bacteria. This is ATP synthase subunit b 2 (atpF2) from Rhodospirillum rubrum (strain ATCC 11170 / ATH 1.1.1 / DSM 467 / LMG 4362 / NCIMB 8255 / S1).